A 390-amino-acid polypeptide reads, in one-letter code: MPPKSLSNLSQTAGVNQSGFFPGASERDFLPATDRTTAEFVIRCVIPSLYLLIITVGLLGNIVLVKIFLTNSAMRSVPNIFISNLAAGDVLLLLTCVPVDASRYFLDEWMFGKVGCKLIPVIQLTSVGVSVFTLTALSADRYRAIVNPMDIQTSGAVLWTCVKAGGIWVVSVLLAVPEAVFSEVARIDGLDNGSFTACIPYPQTDELHPKIHSVLIFLVYFLIPLGIISVYYYHIAKTLIKSAHNLPGEYNEHTKKQMETRKRLAKIVLVFVGCFVFCWFPNHILYMYRSFNYNEIDPSLGHMIVTLVARVLSFCNSCVNPFALYLLSESFRKHFNNQLCCGRKSYRERSPSYLLSSSAVRMTSLKSNAKNIVTNSVVPNGHSVKQEMAL.

Residues 1–44 are Extracellular-facing; sequence MPPKSLSNLSQTAGVNQSGFFPGASERDFLPATDRTTAEFVIRC. Residues Asn-8 and Asn-16 are each glycosylated (N-linked (GlcNAc...) asparagine). The chain crosses the membrane as a helical span at residues 45 to 65; the sequence is VIPSLYLLIITVGLLGNIVLV. At 66 to 76 the chain is on the cytoplasmic side; that stretch reads KIFLTNSAMRS. The chain crosses the membrane as a helical span at residues 77 to 97; the sequence is VPNIFISNLAAGDVLLLLTCV. The Extracellular portion of the chain corresponds to 98 to 117; the sequence is PVDASRYFLDEWMFGKVGCK. Cys-116 and Cys-198 are oxidised to a cystine. The chain crosses the membrane as a helical span at residues 118–138; sequence LIPVIQLTSVGVSVFTLTALS. Over 139–155 the chain is Cytoplasmic; sequence ADRYRAIVNPMDIQTSG. Residues 156–176 traverse the membrane as a helical segment; sequence AVLWTCVKAGGIWVVSVLLAV. At 177–210 the chain is on the extracellular side; it reads PEAVFSEVARIDGLDNGSFTACIPYPQTDELHPK. N-linked (GlcNAc...) asparagine glycosylation occurs at Asn-192. Residues 211 to 231 form a helical membrane-spanning segment; sequence IHSVLIFLVYFLIPLGIISVY. Topologically, residues 232-266 are cytoplasmic; it reads YYHIAKTLIKSAHNLPGEYNEHTKKQMETRKRLAK. A helical membrane pass occupies residues 267 to 287; that stretch reads IVLVFVGCFVFCWFPNHILYM. At 288-305 the chain is on the extracellular side; that stretch reads YRSFNYNEIDPSLGHMIV. The helical transmembrane segment at 306–328 threads the bilayer; that stretch reads TLVARVLSFCNSCVNPFALYLLS. Residues 329 to 390 are Cytoplasmic-facing; it reads ESFRKHFNNQ…GHSVKQEMAL (62 aa). A lipid anchor (S-palmitoyl cysteine) is attached at Cys-341. Position 352 is a phosphoserine (Ser-352).

The protein belongs to the G-protein coupled receptor 1 family. In terms of tissue distribution, highly expressed in peripheral tissues where it is detected in the respiratory system, circulatory system, digestive system, urogenital system, lymphatic organs and endocrine system (at protein level). In the testis, expressed mainly in Leydig cells (at protein level).

It localises to the cell membrane. In terms of biological role, receptor for neuromedin-B. Contributes to the maintenance of basal sigh rate through signaling in the pre-Botzinger complex, a cluster of several thousand neurons in the ventrolateral medulla responsible for inspiration during respiratory activity. Contributes to the induction of sneezing following exposure to chemical irritants or allergens which causes release of NMB by nasal sensory neurons and activation of NMBR-expressing neurons in the sneeze-evoking region of the brainstem. These in turn activate neurons of the caudal ventral respiratory group, giving rise to the sneezing response. Contributes to induction of acute itch, possibly through its activation on dorsal root ganglion neurons by the NMB peptide. Plays a role in the innate immune response to influenza A virus infection by enhancing interferon alpha expression and reducing expression of IL6. Plays a role in CSF1-induced proliferation of osteoclast precursors by contributing to the positive regulation of the expression of the CSF1 receptor CSF1R. This chain is Neuromedin-B receptor (NMBR), found in Sus scrofa (Pig).